Consider the following 1108-residue polypeptide: Retinal guanylyl cyclase 2 (1108 aa).

The signal sequence occupies residues 1–50 (MFLGPWPFSRLLSWFAISSRLSGQHGLTSSKFLRYLCLLALLPLIWWGQA). The Extracellular segment spans residues 51-465 (LPYKIGVIGP…QGKICQGGID (415 aa)). C104 and C132 are oxidised to a cystine. Residues 466-490 (PALAMMVCFALLLALLSINGFAYFI) traverse the membrane as a helical segment. At 491–1108 (RRRINKIQLI…AERQLVRNKP (618 aa)) the chain is on the cytoplasmic side. Residues 532–812 (FQIISEVQSG…DEIFNQFKTF (281 aa)) enclose the Protein kinase domain. The region spanning 884–1014 (TLYFSDIVGF…DTVNTASRME (131 aa)) is the Guanylate cyclase domain.

This sequence belongs to the adenylyl cyclase class-4/guanylyl cyclase family. As to quaternary structure, homodimer. Interacts with RD3; promotes the exit of GUCY2F from the endoplasmic reticulum and its trafficking to the photoreceptor outer segments. In terms of processing, there are 9 conserved cysteine residues in sensory guanylate cyclases, 6 in the extracellular domain, which may be involved in intra- or interchain disulfide bonds. Expressed only in the eye.

Its subcellular location is the membrane. It localises to the photoreceptor outer segment membrane. It carries out the reaction GTP = 3',5'-cyclic GMP + diphosphate. Its activity is regulated as follows. Activated by GUCA1B when free calcium ions concentration is low, and inhibited by GUCA1B when free calcium ions concentration is high. Inhibited by RD3. Functionally, responsible for the synthesis of cyclic GMP (cGMP) in rods and cones of photoreceptors. Plays an essential role in phototransduction, by mediating cGMP replenishment. May also participate in the trafficking of membrane-asociated proteins to the photoreceptor outer segment membrane. The polypeptide is Retinal guanylyl cyclase 2 (Gucy2f) (Rattus norvegicus (Rat)).